Reading from the N-terminus, the 336-residue chain is Oxaloacetate decarboxylase (336 aa).

Residues 10–258 (PIVLDTTVRD…LAAVDLDRIF (249 aa)) form the Pyruvate carboxyltransferase domain. 3 residues coordinate Mn(2+): Asp19, His197, and His199.

This sequence belongs to the 4-hydroxy-2-oxovalerate aldolase family. As to quaternary structure, homodimer. It depends on a divalent metal cation as a cofactor.

The enzyme catalyses oxaloacetate + H(+) = pyruvate + CO2. Activity is abolished upon incubation with Chelex and EDTA. Its function is as follows. Exhibits oxaloacetate decarboxylase activity. Lacks any detectable aldolase activity with 4-hydroxy-2-oxopentanoate (HOPA), 4-hydroxy-2-oxohexanoate (HOHA) or other 4-hydroxy-2-oxoacids. The chain is Oxaloacetate decarboxylase from Mycobacterium tuberculosis (strain ATCC 25618 / H37Rv).